Consider the following 73-residue polypeptide: Protein SlyX homolog (73 aa).

The interval 54–73 (LQQAESNAPAAPANERPPHY) is disordered. The segment covering 57–67 (AESNAPAAPAN) has biased composition (low complexity).

Belongs to the SlyX family.

In Rhodopseudomonas palustris (strain BisA53), this protein is Protein SlyX homolog.